Consider the following 506-residue polypeptide: CTL-like protein DDB_G0269978 (506 aa).

2 N-linked (GlcNAc...) asparagine glycosylation sites follow: asparagine 15 and asparagine 41. A run of 12 helical transmembrane segments spans residues leucine 91 to alanine 111, leucine 126 to tryptophan 146, serine 161 to tryptophan 181, tyrosine 182 to phenylalanine 202, threonine 226 to phenylalanine 246, serine 256 to threonine 276, valine 279 to alanine 299, phenylalanine 323 to cysteine 343, glycine 345 to phenylalanine 367, leucine 371 to serine 393, isoleucine 416 to isoleucine 436, and tryptophan 447 to phenylalanine 467.

It belongs to the CTL (choline transporter-like) family.

The protein resides in the membrane. The chain is CTL-like protein DDB_G0269978 from Dictyostelium discoideum (Social amoeba).